Consider the following 345-residue polypeptide: MSSIPVIELSSRAREIFQLVVESYLGSGLPVGSKTLARQGVNLSPASIRYVLQELETKGLLLSPHISAGRMPTELGLRLFVNGMMQLSEPSEEERSAIEADVIRGHSPKERLVNATTTLSGLSACAGLVLVPKQELVLKQLGFVVLDDNRALAIIVGSDGSVENRVIELSSGFPASALTEASNYINAHFSGYSFSEAKKRLFSQIDLERSELDSAASDLIKRGLAVWSEDSRKRPVLIVRGQSHLLQDASEDLDRAKQLLEELEDKKEIAGLLEKVSESDAAQIFIGSENKLFSLSGSSVIASPYHGEDGHMVGVVAVIGPTRLNYGRIVPMVDFTAKTLSRIIA.

The protein belongs to the HrcA family.

Negative regulator of class I heat shock genes (grpE-dnaK-dnaJ and groELS operons). Prevents heat-shock induction of these operons. This Zymomonas mobilis subsp. mobilis (strain ATCC 31821 / ZM4 / CP4) protein is Heat-inducible transcription repressor HrcA.